The primary structure comprises 457 residues: Neuropeptide receptor npr-1 (457 aa).

At 1 to 22 (MEVENFTDCQVYWKVYPDPSQS) the chain is on the extracellular side. A helical transmembrane segment spans residues 23-43 (IYAIVPFLTVYLFLFFLGLFG). The Cytoplasmic segment spans residues 44 to 62 (NVTLIYVTCSHKALLSVQN). A helical transmembrane segment spans residues 63–83 (IFILNLAASDCMMCILSLPIT). The Extracellular segment spans residues 84–100 (PITNVYKNWYFGNLLCH). Cysteines 99 and 178 form a disulfide. The helical transmembrane segment at 101 to 121 (LIPCIQGISIFVCTFSLGAIA) threads the bilayer. At 122-140 (LDRYILVVRPHSTPLSQRG) the chain is on the cytoplasmic side. The chain crosses the membrane as a helical span at residues 141 to 161 (AFLTTVLLWILSFVVTLPYAF). The Extracellular segment spans residues 162–193 (NMQMIEYTEERICGYFCTEKWESAKSRRAYTM). A helical membrane pass occupies residues 194–214 (IVMLAQFVVPFAVMAFCYANI). Over 215 to 279 (VSVLSKRAQT…LQNRRTTSIL (65 aa)) the chain is Cytoplasmic. Residues 280-300 (VTMVVWFGITWLPHNVISLII) traverse the membrane as a helical segment. Residues 301 to 324 (EYDDTQSFFRLYGRDDYDISYLLN) are Extracellular-facing. Residues 325 to 345 (LFTHSIAMSNNVLNPVLYAWL) form a helical membrane-spanning segment. Residues 346–457 (NPSFRQLVIK…IEFSVNDTLV (112 aa)) are Cytoplasmic-facing.

Belongs to the G-protein coupled receptor 1 family. In terms of tissue distribution, expressed in neurons, including neurons in the head, the ventral nerve cord, and the preanal ganglion.

The protein localises to the membrane. Its function is as follows. G-protein coupled receptor for FARP(FMRFamide related peptide) neuropeptides. Activated by FARP neuropeptides flp-18 and flp-21. Plays a role in modulating social and feeding behavior. Required to modulate locomotion quiescence during the sleep-like state called lethargus, which occurs during molting between larval and adult stages, in part by regulating touch sensitivity. This Caenorhabditis elegans protein is Neuropeptide receptor npr-1.